We begin with the raw amino-acid sequence, 360 residues long: Mannose-1-phosphate guanylyltransferase catalytic subunit beta (360 aa).

A substrate-binding domain region spans residues 2–222 (KALILVGGYG…QGFWMDIGQP (221 aa)). Residue D110 coordinates GDP-alpha-D-mannose. D110 serves as a coordination point for Mg(2+). K162 is a catalytic residue. Residue D218 coordinates GDP-alpha-D-mannose. Mg(2+) is bound at residue D218. Residues 245 to 360 (HVGPGFIGNV…ESVPEPRIIM (116 aa)) form a hexapeptide repeat domain region.

It belongs to the transferase hexapeptide repeat family. As to quaternary structure, component of the GMPPA-GMPPB mannose-1-phosphate guanylyltransferase complex composed of 4 gmppa subunits and 8 gmppb subunits; the complex is organized into three layers, a central layer made up of 2 gmppa dimers sandwiched between two layers each made up of 2 gmppb dimers. Catalytic activity of gmppb is reduced when part of the complex and binding of GDP-alpha-D-Mannose by gmppa induces allosteric feedback inhibition of gmppb. Mg(2+) is required as a cofactor.

It carries out the reaction alpha-D-mannose 1-phosphate + GTP + H(+) = GDP-alpha-D-mannose + diphosphate. Its pathway is nucleotide-sugar biosynthesis; GDP-alpha-D-mannose biosynthesis; GDP-alpha-D-mannose from alpha-D-mannose 1-phosphate (GTP route): step 1/1. With respect to regulation, enzyme activity is reduced by incorporation into the GMPPA-GMPPB mannose-1-phosphate guanylyltransferase complex. Allosterically inhibited, when part of the GMPPA-GMPPB complex, by GDP-alpha-D-mannose binding to GMPPA. Its function is as follows. Catalytic subunit of the GMPPA-GMPPB mannose-1-phosphate guanylyltransferase complex. Catalyzes the formation of GDP-mannose, an essential precursor of glycan moieties of glycoproteins and glycolipids. Can catalyze the reverse reaction in vitro. Together with GMPPA regulates GDP-alpha-D-mannose levels. This Xenopus tropicalis (Western clawed frog) protein is Mannose-1-phosphate guanylyltransferase catalytic subunit beta (gmppb).